Here is a 384-residue protein sequence, read N- to C-terminus: F-box only protein 5-B (384 aa).

Disordered regions lie at residues 1 to 20 (MMCG…KSSA) and 79 to 106 (DEEN…ETDS). The segment covering 9-19 (PSPKKLLSKSS) has biased composition (low complexity). Residues 83–99 (SSLQDSGYSSILQNDSP) show a composition bias toward polar residues. An F-box domain is found at 191 to 238 (AELFHRDFKHLLTKILRHLNAMDLINVIGVSTTWRKILQKDNWAYNTY). The ZBR-type zinc finger occupies 311-359 (SLKACVDCGSPAKYDSYLHRAICTRESCKLDFCTLCSCKYHSSKSCLIS). Zn(2+)-binding residues include C315, C318, C333, C338, C343, C346, H351, and C356.

Part of a SCF (SKP1-cullin-F-box) protein ligase complex. Interacts with btrc. Interacts with skp1. Interacts with cdc20. Interacts with pin1; stabilizes fbxo5 by preventing its association with btrc in an isomerization-dependent pathway; this interaction is present during G2 phase and prevents fbxo5 degradation. Interacts with plk1. Proteolysed; proteolysis is induced by both cyclin B-cdk1 and cyclin A-cdk1/2 complex through probable phosphorylation. Proteolysis is inhibited by pin1 during G2.

The protein resides in the nucleus. Its subcellular location is the cytoplasm. The protein localises to the cytoskeleton. It is found in the spindle. It localises to the microtubule organizing center. The protein resides in the centrosome. Its pathway is protein modification; protein ubiquitination. Regulates progression through early mitosis by inhibiting the anaphase promoting complex/cyclosome (APC). Binds to the APC activators cdc20 to prevent APC activation. Can also bind directly to the APC to inhibit substrate-binding. Required to arrest unfertilized eggs at metaphase of meiosis II, by preventing their release from metaphase of meiosis II, through inhibition of APC-dependent cyclin B destruction leading to stabilization of cyclin B-cdk1 complex activity. This chain is F-box only protein 5-B (fbxo5-b), found in Xenopus laevis (African clawed frog).